Reading from the N-terminus, the 172-residue chain is Photosystem I assembly protein Ycf3 (172 aa).

TPR repeat units follow at residues 35-68, 72-105, and 120-153; these read AFSY…EVDA, SYIL…NPSL, and GEQA…APTN.

Belongs to the Ycf3 family.

Its subcellular location is the plastid. The protein localises to the chloroplast thylakoid membrane. Its function is as follows. Essential for the assembly of the photosystem I (PSI) complex. May act as a chaperone-like factor to guide the assembly of the PSI subunits. This Chlamydomonas reinhardtii (Chlamydomonas smithii) protein is Photosystem I assembly protein Ycf3.